A 295-amino-acid chain; its full sequence is 33 kDa chaperonin (295 aa).

2 cysteine pairs are disulfide-bonded: C238–C240 and C271–C274.

This sequence belongs to the HSP33 family. Under oxidizing conditions two disulfide bonds are formed involving the reactive cysteines. Under reducing conditions zinc is bound to the reactive cysteines and the protein is inactive.

The protein localises to the cytoplasm. Its function is as follows. Redox regulated molecular chaperone. Protects both thermally unfolding and oxidatively damaged proteins from irreversible aggregation. Plays an important role in the bacterial defense system toward oxidative stress. The sequence is that of 33 kDa chaperonin from Clostridium botulinum (strain Alaska E43 / Type E3).